Consider the following 390-residue polypeptide: 8-amino-7-oxononanoate synthase (390 aa).

A substrate-binding site is contributed by arginine 19. Glycine 106–tyrosine 107 contacts pyridoxal 5'-phosphate. Histidine 131 contributes to the substrate binding site. Pyridoxal 5'-phosphate-binding residues include serine 176, histidine 204, and threonine 233. At lysine 236 the chain carries N6-(pyridoxal phosphate)lysine. Threonine 350 is a substrate binding site.

This sequence belongs to the class-II pyridoxal-phosphate-dependent aminotransferase family. BioF subfamily. As to quaternary structure, homodimer. The cofactor is pyridoxal 5'-phosphate.

The catalysed reaction is 6-carboxyhexanoyl-[ACP] + L-alanine + H(+) = (8S)-8-amino-7-oxononanoate + holo-[ACP] + CO2. Its pathway is cofactor biosynthesis; biotin biosynthesis. Functionally, catalyzes the decarboxylative condensation of pimeloyl-[acyl-carrier protein] and L-alanine to produce 8-amino-7-oxononanoate (AON), [acyl-carrier protein], and carbon dioxide. The chain is 8-amino-7-oxononanoate synthase from Pseudomonas entomophila (strain L48).